We begin with the raw amino-acid sequence, 412 residues long: Glucose/galactose transporter (412 aa).

The next 11 membrane-spanning stretches (helical) occupy residues Tyr-21–Leu-41, Leu-62–Val-82, Gly-90–Ser-110, Val-113–Val-133, Phe-158–Ala-178, Phe-192–Lys-212, Leu-239–Val-259, Ala-310–Trp-330, Ser-331–Leu-351, Gly-363–Ala-383, and Ile-388–Ile-408.

This sequence belongs to the major facilitator superfamily. FHS transporter (TC 2.A.1.7) family.

It localises to the cell inner membrane. In terms of biological role, intake of glucose and galactose. The sequence is that of Glucose/galactose transporter (gluP) from Brucella abortus (strain 2308).